Here is a 503-residue protein sequence, read N- to C-terminus: Aromatase 2 (503 aa).

Cys-437 is a heme binding site.

Belongs to the cytochrome P450 family. Heme is required as a cofactor.

It localises to the membrane. The enzyme catalyses testosterone + 3 reduced [NADPH--hemoprotein reductase] + 3 O2 = 17beta-estradiol + formate + 3 oxidized [NADPH--hemoprotein reductase] + 4 H2O + 4 H(+). It catalyses the reaction androst-4-ene-3,17-dione + 3 reduced [NADPH--hemoprotein reductase] + 3 O2 = estrone + formate + 3 oxidized [NADPH--hemoprotein reductase] + 4 H2O + 4 H(+). Catalyzes the formation of aromatic C18 estrogens from C19 androgens. This Sus scrofa (Pig) protein is Aromatase 2 (CYP19A2).